We begin with the raw amino-acid sequence, 956 residues long: F-box only protein 10 (956 aa).

The region spanning 1 to 48 is the F-box domain; that stretch reads MEAGGLPLELWRMILAYLHLPDLGRCSLVCRAWYELILSLDSTRWRQL. PbH1 repeat units lie at residues 198–217 and 238–260; these read SGHV…QVHG and VPLC…TVEG. Positions 314-367 are disordered; the sequence is EGSQSPTSPASSSPKPGSKAGSQEAEVGSDGERVAQTPDSSDGGLSPSGEDEDE. Low complexity-rich tracts occupy residues 316–336 and 351–361; these read SQSP…AGSQ and PDSSDGGLSPS. 2 positions are modified to phosphoserine: S321 and S326. PbH1 repeat units follow at residues 427-448, 449-470, 471-493, 494-516, 538-560, 561-583, 584-606, 607-629, 630-652, 653-675, 717-739, 740-762, 764-786, 787-809, and 832-854; these read VQGC…FVCS, HGRA…RCIH, NSKI…FLRL, EGGG…DIRK, LGNG…GIYI, LYHG…GIAV, NENG…GVDI, RRGG…GVVV, GDEG…GVWM, MSSS…GVAV, RPIT…GLYV, QSSE…GITV, QSSQ…GVKV, EAQC…GIIT, and LPRS…GIAV.

Component of the SCF(FBXO10) complex consisting of CUL1, SKP1 and FBXO10. Interacts with BCL2. Interacts with PRDM1.

The protein resides in the cytoplasm. It functions in the pathway protein modification; protein ubiquitination. In terms of biological role, substrate-recognition component of the SCF (SKP1-CUL1-F-box protein)-type E3 ubiquitin ligase complex. Mediates the ubiquitination and degradation of BCL2, an antiapoptotic protein, thereby playing a role in apoptosis by controlling the stability of BCL2. Targets also the receptor for advanced glycation end products RAGE for ubiquitination and subsequent lysosomal degradation. Directly controls HGAL/GCSAM ubiquitination and degradation and thereby decreases BCR signaling. This is F-box only protein 10 (FBXO10) from Homo sapiens (Human).